Consider the following 332-residue polypeptide: Cysteine and histidine-rich domain-containing protein 1 (332 aa).

Residue A2 is modified to N-acetylalanine. The interval 2 to 77 is interaction with PPP5C; the sequence is ALLCYNRGCG…KPPESVKPEV (76 aa). Zn(2+) is bound by residues C5, C10, C24, H27, C42, and C43. 2 consecutive CHORD domains span residues 5–64 and 157–216; these read CYNR…KGRH and CKNG…KGKH. T47 is subject to Phosphothreonine. Position 51 is a phosphoserine (S51). The Zn(2+) site is built by C59, H64, C157, C162, C176, H179, C194, C195, C211, and H216. Positions 62 to 81 are disordered; the sequence is GRHNSEKPPESVKPEVKTTE. The span at 64 to 81 shows a compositional bias: basic and acidic residues; the sequence is HNSEKPPESVKPEVKTTE. The interaction with HSP90AA1 and HSP90AB1 stretch occupies residues 65–316; that stretch reads NSEKPPESVK…AEPMQWASLE (252 aa). Positions 227-316 constitute a CS domain; sequence VVPCRHDWHQ…AEPMQWASLE (90 aa).

In terms of assembly, interacts with HSP90AA1, HSP90AB1, PPP5C, ROCK1 and ROCK2.

In terms of biological role, regulates centrosome duplication, probably by inhibiting the kinase activity of ROCK2. Proposed to act as co-chaperone for HSP90. May play a role in the regulation of NOD1 via a HSP90 chaperone complex. In vitro, has intrinsic chaperone activity. This function may be achieved by inhibiting association of ROCK2 with NPM1. Plays a role in ensuring the localization of the tyrosine kinase receptor EGFR to the plasma membrane, and thus ensures the subsequent regulation of EGFR activity and EGF-induced actin cytoskeleton remodeling. Involved in stress response. Prevents tumorigenesis. This is Cysteine and histidine-rich domain-containing protein 1 (CHORDC1) from Pongo abelii (Sumatran orangutan).